The sequence spans 120 residues: MSKLKITNARRKQRVRLSLRRIANGRPRLSVFRSSKHIYAQVIDDLKGETLASASSLEKAMRDTGNTGANIDAAKAVGKLLAERAVKNGVTEVVFDRGGYLYHGRIKALADAARESGLSF.

It belongs to the universal ribosomal protein uL18 family. Part of the 50S ribosomal subunit; part of the 5S rRNA/L5/L18/L25 subcomplex. Contacts the 5S and 23S rRNAs.

Functionally, this is one of the proteins that bind and probably mediate the attachment of the 5S RNA into the large ribosomal subunit, where it forms part of the central protuberance. This is Large ribosomal subunit protein uL18 from Rhodopseudomonas palustris (strain BisB18).